The sequence spans 392 residues: Phosphoglycerate kinase (392 aa).

Substrate is bound by residues 19-21, R34, 57-60, R116, and R149; these read DYN and HLGR. ATP is bound by residues K199, E321, and 347–350; that span reads GGDS.

It belongs to the phosphoglycerate kinase family. In terms of assembly, monomer.

It localises to the cytoplasm. It carries out the reaction (2R)-3-phosphoglycerate + ATP = (2R)-3-phospho-glyceroyl phosphate + ADP. Its pathway is carbohydrate degradation; glycolysis; pyruvate from D-glyceraldehyde 3-phosphate: step 2/5. This is Phosphoglycerate kinase from Thermomicrobium roseum (strain ATCC 27502 / DSM 5159 / P-2).